We begin with the raw amino-acid sequence, 474 residues long: UDP-N-acetylmuramoylalanine--D-glutamate ligase (474 aa).

134–140 provides a ligand contact to ATP; sequence GSNGKST.

It belongs to the MurCDEF family.

The protein resides in the cytoplasm. The enzyme catalyses UDP-N-acetyl-alpha-D-muramoyl-L-alanine + D-glutamate + ATP = UDP-N-acetyl-alpha-D-muramoyl-L-alanyl-D-glutamate + ADP + phosphate + H(+). Its pathway is cell wall biogenesis; peptidoglycan biosynthesis. Cell wall formation. Catalyzes the addition of glutamate to the nucleotide precursor UDP-N-acetylmuramoyl-L-alanine (UMA). This is UDP-N-acetylmuramoylalanine--D-glutamate ligase from Thiobacillus denitrificans (strain ATCC 25259 / T1).